Reading from the N-terminus, the 581-residue chain is Colicin-E2 (581 aa).

Disordered regions lie at residues M1–G74, Q242–D269, P293–E320, A421–K488, and D513–I566. Gly residues predominate over residues I20 to D35. Low complexity predominate over residues G36–P45. Residues W46–G74 are compositionally biased toward gly residues. Residues Q242 to N251 show a composition bias toward polar residues. Composition is skewed to basic and acidic residues over residues V296–E320, Q429–R452, and P464–K475. The span at F518–Q527 shows a compositional bias: polar residues. Positions R535–I554 are enriched in basic and acidic residues. Residues H549, H574, and H578 each coordinate Zn(2+).

This sequence belongs to the colicin/pyosin nuclease family.

This plasmid-coded bactericidal protein is an endonuclease active on both single- and double-stranded DNA but with undefined specificity. Its function is as follows. Colicins are polypeptide toxins produced by and active against E.coli and closely related bacteria. The polypeptide is Colicin-E2 (col) (Escherichia coli).